The following is a 482-amino-acid chain: Probable cytosol aminopeptidase (482 aa).

Positions 251 and 256 each coordinate Mn(2+). The active site involves K263. Mn(2+)-binding residues include D274, D333, and E335. R337 is a catalytic residue.

It belongs to the peptidase M17 family. It depends on Mn(2+) as a cofactor.

The protein resides in the cytoplasm. It carries out the reaction Release of an N-terminal amino acid, Xaa-|-Yaa-, in which Xaa is preferably Leu, but may be other amino acids including Pro although not Arg or Lys, and Yaa may be Pro. Amino acid amides and methyl esters are also readily hydrolyzed, but rates on arylamides are exceedingly low.. The catalysed reaction is Release of an N-terminal amino acid, preferentially leucine, but not glutamic or aspartic acids.. In terms of biological role, presumably involved in the processing and regular turnover of intracellular proteins. Catalyzes the removal of unsubstituted N-terminal amino acids from various peptides. The protein is Probable cytosol aminopeptidase of Acinetobacter baumannii (strain AB307-0294).